The primary structure comprises 384 residues: Chorismate synthase (384 aa).

Positions 40 and 46 each coordinate NADP(+). Residues 127–129 (RTS), 247–248 (QA), Ala292, 307–311 (KPIPT), and Arg333 each bind FMN.

This sequence belongs to the chorismate synthase family. In terms of assembly, homotetramer. FMNH2 is required as a cofactor.

The enzyme catalyses 5-O-(1-carboxyvinyl)-3-phosphoshikimate = chorismate + phosphate. It functions in the pathway metabolic intermediate biosynthesis; chorismate biosynthesis; chorismate from D-erythrose 4-phosphate and phosphoenolpyruvate: step 7/7. Its function is as follows. Catalyzes the anti-1,4-elimination of the C-3 phosphate and the C-6 proR hydrogen from 5-enolpyruvylshikimate-3-phosphate (EPSP) to yield chorismate, which is the branch point compound that serves as the starting substrate for the three terminal pathways of aromatic amino acid biosynthesis. This reaction introduces a second double bond into the aromatic ring system. This chain is Chorismate synthase, found in Alkaliphilus oremlandii (strain OhILAs) (Clostridium oremlandii (strain OhILAs)).